The primary structure comprises 105 residues: Large ribosomal subunit protein bL21 (105 aa).

The protein belongs to the bacterial ribosomal protein bL21 family. Part of the 50S ribosomal subunit. Contacts protein L20.

Functionally, this protein binds to 23S rRNA in the presence of protein L20. The chain is Large ribosomal subunit protein bL21 from Stenotrophomonas maltophilia (strain R551-3).